The chain runs to 274 residues: Tryptophan synthase alpha chain (274 aa).

Active-site proton acceptor residues include Glu-49 and Asp-60.

The protein belongs to the TrpA family. In terms of assembly, tetramer of two alpha and two beta chains.

It carries out the reaction (1S,2R)-1-C-(indol-3-yl)glycerol 3-phosphate + L-serine = D-glyceraldehyde 3-phosphate + L-tryptophan + H2O. The protein operates within amino-acid biosynthesis; L-tryptophan biosynthesis; L-tryptophan from chorismate: step 5/5. In terms of biological role, the alpha subunit is responsible for the aldol cleavage of indoleglycerol phosphate to indole and glyceraldehyde 3-phosphate. The sequence is that of Tryptophan synthase alpha chain from Zymomonas mobilis subsp. mobilis (strain ATCC 31821 / ZM4 / CP4).